Reading from the N-terminus, the 251-residue chain is Ubiquinone/menaquinone biosynthesis C-methyltransferase UbiE (251 aa).

Residues Thr74, Asp95, 123 to 124, and Ser140 contribute to the S-adenosyl-L-methionine site; that span reads NA.

It belongs to the class I-like SAM-binding methyltransferase superfamily. MenG/UbiE family.

It carries out the reaction a 2-demethylmenaquinol + S-adenosyl-L-methionine = a menaquinol + S-adenosyl-L-homocysteine + H(+). The catalysed reaction is a 2-methoxy-6-(all-trans-polyprenyl)benzene-1,4-diol + S-adenosyl-L-methionine = a 5-methoxy-2-methyl-3-(all-trans-polyprenyl)benzene-1,4-diol + S-adenosyl-L-homocysteine + H(+). The protein operates within quinol/quinone metabolism; menaquinone biosynthesis; menaquinol from 1,4-dihydroxy-2-naphthoate: step 2/2. It participates in cofactor biosynthesis; ubiquinone biosynthesis. Functionally, methyltransferase required for the conversion of demethylmenaquinol (DMKH2) to menaquinol (MKH2) and the conversion of 2-polyprenyl-6-methoxy-1,4-benzoquinol (DDMQH2) to 2-polyprenyl-3-methyl-6-methoxy-1,4-benzoquinol (DMQH2). This Escherichia fergusonii (strain ATCC 35469 / DSM 13698 / CCUG 18766 / IAM 14443 / JCM 21226 / LMG 7866 / NBRC 102419 / NCTC 12128 / CDC 0568-73) protein is Ubiquinone/menaquinone biosynthesis C-methyltransferase UbiE.